The following is a 511-amino-acid chain: Glutamate/gamma-aminobutyrate antiporter (511 aa).

Over 1–14 (MATLVQTGKAKQLT) the chain is Cytoplasmic. Residues 15 to 35 (LLGFFAITASMVMAVYEYPTF) form a helical membrane-spanning segment. At 36 to 41 (ATSGFS) the chain is on the periplasmic side. The chain crosses the membrane as a helical span at residues 42 to 62 (LVFFLLLGGILWFIPVGLCAA). Residues 63 to 93 (EMATVDGWEEGGVFAWVSNTLGPRWGFAAIS) lie on the Cytoplasmic side of the membrane. A helical transmembrane segment spans residues 94–114 (FGYLQIAIGFIPMLYFVLGAL). The Periplasmic portion of the chain corresponds to 115-127 (SYILKWPALNEDP). A helical transmembrane segment spans residues 128–148 (ITKTIAALIILWALALTQFGG). Topologically, residues 149 to 157 (TKYTARIAK) are cytoplasmic. A helical transmembrane segment spans residues 158–178 (VGFFAGILLPAFILIALAAIY). The Periplasmic segment spans residues 179–200 (LHSGAPVAIEMDSKTFFPDFSK). The helical transmembrane segment at 201 to 221 (VGTLVVFVAFILSYMGVEASA) threads the bilayer. Residues 222 to 239 (THVNEMSNPGRDYPLAML) are Cytoplasmic-facing. The helical transmembrane segment at 240 to 260 (LLMVAAICLSSVGGLSIAMVI) threads the bilayer. The Periplasmic segment spans residues 261 to 291 (PGNEINLSAGVMQTFTVLMSHVAPEIEWTVR). Residues 292–312 (VISALLLLGVLAEIASWIVGP) traverse the membrane as a helical segment. Over 313-335 (SRGMYVTAQKNLLPAAFAKMNKN) the chain is Cytoplasmic. Residues 336-356 (GVPVTLVISQLVITSIALIIL) form a helical membrane-spanning segment. Residues 357–366 (TNTGGGNNMS) lie on the Periplasmic side of the membrane. Residues 367–387 (FLIALALTVVIYLCAYFMLFI) form a helical membrane-spanning segment. The Cytoplasmic portion of the chain corresponds to 388–412 (GYIVLVLKHPDLKRTFNIPGGKGVK). A helical transmembrane segment spans residues 413–433 (LVVAIVGLLTSIMAFIVSFLP). Over 434–445 (PDNIQGDSTDMY) the chain is Periplasmic. A helical membrane pass occupies residues 446–466 (VELLVVSFLVVLALPFILYAV). The Cytoplasmic segment spans residues 467–511 (HDRKGKANTGVTLEPINSQNAPKGHFFLHPRARSPHYIVMNDKKH).

The protein belongs to the amino acid-polyamine-organocation (APC) superfamily. Glutamate:GABA antiporter (GGA) (TC 2.A.3.7) family.

Its subcellular location is the cell inner membrane. It carries out the reaction 4-aminobutanoate(in) + L-glutamate(out) = 4-aminobutanoate(out) + L-glutamate(in). Its activity is regulated as follows. Shows pH-dependent activity. The glutamate analog L-trans-pyrrolidine-2,4-dicarboxylic acid (L-PDC) blocks the uptake of glutamate by selective inhibition. Functionally, involved in glutaminase-dependent acid resistance. Exchanges extracellular glutamate (Glu) for intracellular gamma-aminobutyric acid (GABA) under acidic conditions. The ability to survive the extremely acidic conditions of the stomach is essential for successful colonization of the host by commensal and pathogenic bacteria. The sequence is that of Glutamate/gamma-aminobutyrate antiporter (gadC) from Escherichia coli O157:H7.